The primary structure comprises 133 residues: Small ribosomal subunit protein uS8 (133 aa).

Belongs to the universal ribosomal protein uS8 family. In terms of assembly, part of the 30S ribosomal subunit. Contacts proteins S5 and S12.

One of the primary rRNA binding proteins, it binds directly to 16S rRNA central domain where it helps coordinate assembly of the platform of the 30S subunit. The sequence is that of Small ribosomal subunit protein uS8 from Gloeothece citriformis (strain PCC 7424) (Cyanothece sp. (strain PCC 7424)).